Here is a 196-residue protein sequence, read N- to C-terminus: MPIGVPRVPFRSPGEEDASWVDIYNRLYRERLLFLGQEVDSEISNQLISLMVYLSIEEENKDLYLFINSPGGWVIPGIAIYDTMQFVQPDVQTVCMGLAASMGSFLLAGGEITKRLAFPHARVMIHQPASSFYEAQTGEFILEAEELLKMRETITRVYVQRTGKPLWVISEDMERDVFMSAAEAQAHGIVDLVAVE.

Ser101 (nucleophile) is an active-site residue. His126 is a catalytic residue.

The protein belongs to the peptidase S14 family. In terms of assembly, component of the chloroplastic Clp protease core complex.

It localises to the plastid. The protein localises to the chloroplast stroma. The catalysed reaction is Hydrolysis of proteins to small peptides in the presence of ATP and magnesium. alpha-casein is the usual test substrate. In the absence of ATP, only oligopeptides shorter than five residues are hydrolyzed (such as succinyl-Leu-Tyr-|-NHMec, and Leu-Tyr-Leu-|-Tyr-Trp, in which cleavage of the -Tyr-|-Leu- and -Tyr-|-Trp bonds also occurs).. Cleaves peptides in various proteins in a process that requires ATP hydrolysis. Has a chymotrypsin-like activity. Plays a major role in the degradation of misfolded proteins. In Glycine max (Soybean), this protein is ATP-dependent Clp protease proteolytic subunit.